Consider the following 1225-residue polypeptide: DNA-directed RNA polymerase subunit beta' (1225 aa).

Zn(2+)-binding residues include Cys60, Cys62, Cys75, and Cys78. 3 residues coordinate Mg(2+): Asp450, Asp452, and Asp454. Zn(2+) contacts are provided by Cys818, Cys892, Cys899, and Cys902.

The protein belongs to the RNA polymerase beta' chain family. The RNAP catalytic core consists of 2 alpha, 1 beta, 1 beta' and 1 omega subunit. When a sigma factor is associated with the core the holoenzyme is formed, which can initiate transcription. Requires Mg(2+) as cofactor. Zn(2+) serves as cofactor.

The enzyme catalyses RNA(n) + a ribonucleoside 5'-triphosphate = RNA(n+1) + diphosphate. In terms of biological role, DNA-dependent RNA polymerase catalyzes the transcription of DNA into RNA using the four ribonucleoside triphosphates as substrates. The protein is DNA-directed RNA polymerase subunit beta' of Streptococcus pneumoniae serotype 19F (strain G54).